Consider the following 144-residue polypeptide: Ferredoxin-thioredoxin reductase catalytic chain, chloroplastic (144 aa).

Residues 1–31 (MKALQASIAYSFPISSPAASPRRFSRVIRAQ) constitute a chloroplast transit peptide. Cys-83 is a binding site for [4Fe-4S] cluster. Catalysis depends on Cys-85, which acts as the Nucleophile. A disulfide bridge connects residues Cys-85 and Cys-115. Residues Cys-102, Cys-104, and Cys-113 each contribute to the [4Fe-4S] cluster site.

Belongs to the ferredoxin thioredoxin reductase beta subunit family. As to quaternary structure, heterodimer of subunit A (variable subunit) and subunit B (catalytic subunit). Heterodimeric FTR forms a complex with ferredoxin and thioredoxin. [4Fe-4S] cluster is required as a cofactor.

It localises to the plastid. Its subcellular location is the chloroplast. The enzyme catalyses [thioredoxin]-disulfide + 2 reduced [2Fe-2S]-[ferredoxin] + 2 H(+) = [thioredoxin]-dithiol + 2 oxidized [2Fe-2S]-[ferredoxin]. Catalytic subunit of the ferredoxin-thioredoxin reductase (FTR), which catalyzes the two-electron reduction of thioredoxins by the electrons provided by reduced ferredoxin. In Spinacia oleracea (Spinach), this protein is Ferredoxin-thioredoxin reductase catalytic chain, chloroplastic (FTRC).